Reading from the N-terminus, the 261-residue chain is Phosphatidylglycerol--prolipoprotein diacylglyceryl transferase (261 aa).

4 helical membrane-spanning segments follow: residues 12-32 (ISIR…VYLA), 41-61 (IIPD…IVGA), 87-107 (GIAG…LYFF), and 112-132 (LIHP…AQSI). R134 is an a 1,2-diacyl-sn-glycero-3-phospho-(1'-sn-glycerol) binding site. 3 helical membrane passes run 170–190 (QPTF…IIVL), 200–220 (GEIA…IEGM), and 229–249 (GLRV…GIII).

It belongs to the Lgt family.

It localises to the cell membrane. The enzyme catalyses L-cysteinyl-[prolipoprotein] + a 1,2-diacyl-sn-glycero-3-phospho-(1'-sn-glycerol) = an S-1,2-diacyl-sn-glyceryl-L-cysteinyl-[prolipoprotein] + sn-glycerol 1-phosphate + H(+). Its pathway is protein modification; lipoprotein biosynthesis (diacylglyceryl transfer). Its function is as follows. Catalyzes the transfer of the diacylglyceryl group from phosphatidylglycerol to the sulfhydryl group of the N-terminal cysteine of a prolipoprotein, the first step in the formation of mature lipoproteins. This is Phosphatidylglycerol--prolipoprotein diacylglyceryl transferase from Streptococcus sanguinis (strain SK36).